A 929-amino-acid polypeptide reads, in one-letter code: Formin-like protein 11 (929 aa).

Residues 1 to 28 (MMRHCRREWLLALCLISVQLLIPTGCEG) form the signal peptide. Positions 153 to 215 (ESSTTKSIPE…KSVAEKKKDS (63 aa)) are disordered. The span at 171 to 189 (KTSTPKPVNKPTDSVSSPP) shows a compositional bias: polar residues. Residues 191-215 (RSYKSAPTEKENPPTKSVAEKKKDS) are compositionally biased toward basic and acidic residues. Residues 222–242 (FIGLSIAGIALMAHLCLCCFM) traverse the membrane as a helical segment. 2 disordered regions span residues 372 to 472 (PVGS…ENSN) and 726 to 749 (AAKEQNSGVSSVKTDDLGDKSEQT). Over residues 382 to 447 (MQPPVMPPPI…GPPRPPPPAM (66 aa)) the composition is skewed to pro residues. The 431-residue stretch at 468 to 898 (VENSNEAKTK…KAKAKQPSQS (431 aa)) folds into the FH2 domain. The segment covering 738-749 (KTDDLGDKSEQT) has biased composition (basic and acidic residues).

The protein belongs to the formin-like family. Class-I subfamily.

It is found in the membrane. In Oryza sativa subsp. japonica (Rice), this protein is Formin-like protein 11 (FH11).